The sequence spans 570 residues: Apyrase (570 aa).

Positions 1–23 (MALVRFATIITVLCHLAIQDGAA) are cleaved as a signal peptide. Residues Asp-43, His-45, and Asp-94 each coordinate a divalent metal cation. N-linked (GlcNAc...) asparagine glycosylation occurs at Asn-108. A divalent metal cation is bound by residues Asn-126, His-229, and His-253. Residues Asn-287 and Asn-326 are each glycosylated (N-linked (GlcNAc...) asparagine). Arg-367 contributes to the AMP binding site. A glycan (N-linked (GlcNAc...) asparagine) is linked at Asn-387. The AMP site is built by Arg-402 and Asp-507. N-linked (GlcNAc...) asparagine glycans are attached at residues Asn-552 and Asn-555.

Belongs to the 5'-nucleotidase family. Interacts with human PLAT; the interaction results in PLAT activation probably via an allosteric activation mechanism. It depends on a divalent metal cation as a cofactor. Saliva (at protein level). Salivary gland (at protein level). Not detected in midgut.

The protein resides in the secreted. The catalysed reaction is a ribonucleoside 5'-triphosphate + 2 H2O = a ribonucleoside 5'-phosphate + 2 phosphate + 2 H(+). In terms of biological role, cleaves adenosine triphosphate (ATP) and adenosine diphosphate (ADP) to adenosine monophosphate (AMP) and inorganic phosphate. Enhances fibrin degradation in the midgut blood bolus. Activates human tissue plasminogen activator (PLAT), probably via an allosteric activation mechanism. Inhibits ADP-mediated host platelet aggregation in vitro and in mosquito midgut. Inhibits host neutrophil activation in the mosquito midgut: reduces neutrophil extracellular traps formation in the presence of platelets and the formation of total cell- and mitochondrial-derived reactive oxygen species. Functionally, (Microbial infection) Promotes Plasmodium berghei parasite transmission from the mammalian host to the mosquito probably by reducing the blood bolus viscosity. Facilitates sporozoite transmission from the mosquito to the mammalian host during blood feeding. This is Apyrase from Anopheles gambiae (African malaria mosquito).